Reading from the N-terminus, the 124-residue chain is Small ribosomal subunit protein bS6 (124 aa).

A disordered region spans residues P99 to D124. The segment covering S109–D124 has biased composition (low complexity).

Belongs to the bacterial ribosomal protein bS6 family.

Its function is as follows. Binds together with bS18 to 16S ribosomal RNA. The chain is Small ribosomal subunit protein bS6 from Synechococcus sp. (strain CC9605).